The primary structure comprises 609 residues: DNA mismatch repair protein MutL (609 aa).

This sequence belongs to the DNA mismatch repair MutL/HexB family.

In terms of biological role, this protein is involved in the repair of mismatches in DNA. It is required for dam-dependent methyl-directed DNA mismatch repair. May act as a 'molecular matchmaker', a protein that promotes the formation of a stable complex between two or more DNA-binding proteins in an ATP-dependent manner without itself being part of a final effector complex. The chain is DNA mismatch repair protein MutL from Rickettsia felis (strain ATCC VR-1525 / URRWXCal2) (Rickettsia azadi).